The sequence spans 353 residues: Keratocan (353 aa).

The signal sequence occupies residues methionine 1–threonine 21. In terms of domain architecture, LRRNT spans glutamate 34 to alanine 72. 2 disulfide bridges follow: cysteine 43-cysteine 49 and cysteine 47-cysteine 59. LRR repeat units lie at residues arginine 73–asparagine 94, histidine 97–leucine 118, arginine 123–valine 143, glycine 144–asparagine 165, asparagine 168–threonine 188, serine 194–alanine 214, asparagine 215–alanine 236, lysine 239–valine 262, serine 264–alanine 283, and histidine 284–proline 305. Residue asparagine 94 is glycosylated (N-linked (GlcNAc...) (keratan sulfate) asparagine). Residue asparagine 168 is glycosylated (N-linked (GlcNAc...) asparagine). 2 N-linked (GlcNAc...) (keratan sulfate) asparagine glycosylation sites follow: asparagine 223 and asparagine 261. A glycan (N-linked (GlcNAc...) asparagine) is linked at asparagine 299. Cysteine 304 and cysteine 344 are disulfide-bonded.

The protein belongs to the small leucine-rich proteoglycan (SLRP) family. SLRP class II subfamily. In terms of processing, binds keratan sulfate chains.

The protein resides in the secreted. The protein localises to the extracellular space. It localises to the extracellular matrix. Functionally, plays an important role in generating and maintaining a transparent matrix within the corneal stroma. The chain is Keratocan (KERA) from Gallus gallus (Chicken).